We begin with the raw amino-acid sequence, 219 residues long: Mediator of RNA polymerase II transcription subunit 7 (219 aa).

Residues 173–203 are disordered; sequence LPDPAESDRLNSTVEPMDTGDDGEAGKSRGE.

Belongs to the Mediator complex subunit 7 family. In terms of assembly, component of the Mediator complex.

Its subcellular location is the nucleus. In terms of biological role, component of the Mediator complex, a coactivator involved in the regulated transcription of nearly all RNA polymerase II-dependent genes. Mediator functions as a bridge to convey information from gene-specific regulatory proteins to the basal RNA polymerase II transcription machinery. Mediator is recruited to promoters by direct interactions with regulatory proteins and serves as a scaffold for the assembly of a functional preinitiation complex with RNA polymerase II and the general transcription factors. This chain is Mediator of RNA polymerase II transcription subunit 7 (MED7), found in Aedes aegypti (Yellowfever mosquito).